Here is a 635-residue protein sequence, read N- to C-terminus: Threonine--tRNA ligase (635 aa).

The TGS domain occupies 1 to 61 (MIAITLPDGS…EQNVDLAIVT (61 aa)). The segment at 242–533 (DHRKLGKLLD…LLENHAGALP (292 aa)) is catalytic. The Zn(2+) site is built by Cys-333, His-384, and His-510.

It belongs to the class-II aminoacyl-tRNA synthetase family. As to quaternary structure, homodimer. It depends on Zn(2+) as a cofactor.

It is found in the cytoplasm. The enzyme catalyses tRNA(Thr) + L-threonine + ATP = L-threonyl-tRNA(Thr) + AMP + diphosphate + H(+). Its function is as follows. Catalyzes the attachment of threonine to tRNA(Thr) in a two-step reaction: L-threonine is first activated by ATP to form Thr-AMP and then transferred to the acceptor end of tRNA(Thr). Also edits incorrectly charged L-seryl-tRNA(Thr). This chain is Threonine--tRNA ligase, found in Ralstonia nicotianae (strain ATCC BAA-1114 / GMI1000) (Ralstonia solanacearum).